Reading from the N-terminus, the 226-residue chain is Orotidine 5'-phosphate decarboxylase (226 aa).

Residues aspartate 8, lysine 30, 58–67 (DLKIHDIPNT), threonine 117, arginine 177, glutamine 186, glycine 206, and arginine 207 contribute to the substrate site. The Proton donor role is filled by lysine 60.

The protein belongs to the OMP decarboxylase family. Type 1 subfamily. As to quaternary structure, homodimer.

The enzyme catalyses orotidine 5'-phosphate + H(+) = UMP + CO2. The protein operates within pyrimidine metabolism; UMP biosynthesis via de novo pathway; UMP from orotate: step 2/2. Catalyzes the decarboxylation of orotidine 5'-monophosphate (OMP) to uridine 5'-monophosphate (UMP). The chain is Orotidine 5'-phosphate decarboxylase from Campylobacter jejuni subsp. jejuni serotype O:6 (strain 81116 / NCTC 11828).